The sequence spans 28 residues: Cliotide T21 (28 aa).

Positions Asp1–Asn28 form a cross-link, cyclopeptide (Asp-Asn). 3 disulfides stabilise this stretch: Cys4/Cys17, Cys8/Cys19, and Cys13/Cys25.

Post-translationally, contains 3 disulfide bonds. In terms of processing, this is a cyclic peptide. Expressed in root nodules but not in seed.

Functionally, probably participates in a plant defense mechanism. Not active against Gram-negative bacterium E.coli ATCC 700926 or Gram-positive bacterium S.aureus ATCC 12600 up to a concentration of 100 uM under low-salt conditions. The polypeptide is Cliotide T21 (Clitoria ternatea (Butterfly pea)).